The following is a 98-amino-acid chain: Large ribosomal subunit protein uL23 (98 aa).

Belongs to the universal ribosomal protein uL23 family. In terms of assembly, part of the 50S ribosomal subunit. Contacts protein L29, and trigger factor when it is bound to the ribosome.

Its function is as follows. One of the early assembly proteins it binds 23S rRNA. One of the proteins that surrounds the polypeptide exit tunnel on the outside of the ribosome. Forms the main docking site for trigger factor binding to the ribosome. The polypeptide is Large ribosomal subunit protein uL23 (Nitrobacter hamburgensis (strain DSM 10229 / NCIMB 13809 / X14)).